A 333-amino-acid chain; its full sequence is Ketol-acid reductoisomerase (NADP(+)) (333 aa).

Residues 1 to 179 (MFYDDNADLS…GGTRAGVIKT (179 aa)) form the KARI N-terminal Rossmann domain. NADP(+) is bound by residues 22–25 (YGSQ), Ser48, Ser50, and 80–83 (DTAQ). His105 is an active-site residue. Gly131 lines the NADP(+) pocket. A KARI C-terminal knotted domain is found at 180–325 (TFKDETETDL…KKLRDLMSWV (146 aa)). Residues Asp188, Glu192, Glu224, and Glu228 each contribute to the Mg(2+) site. Ser249 is a substrate binding site.

This sequence belongs to the ketol-acid reductoisomerase family. It depends on Mg(2+) as a cofactor.

The enzyme catalyses (2R)-2,3-dihydroxy-3-methylbutanoate + NADP(+) = (2S)-2-acetolactate + NADPH + H(+). It catalyses the reaction (2R,3R)-2,3-dihydroxy-3-methylpentanoate + NADP(+) = (S)-2-ethyl-2-hydroxy-3-oxobutanoate + NADPH + H(+). Its pathway is amino-acid biosynthesis; L-isoleucine biosynthesis; L-isoleucine from 2-oxobutanoate: step 2/4. It participates in amino-acid biosynthesis; L-valine biosynthesis; L-valine from pyruvate: step 2/4. Functionally, involved in the biosynthesis of branched-chain amino acids (BCAA). Catalyzes an alkyl-migration followed by a ketol-acid reduction of (S)-2-acetolactate (S2AL) to yield (R)-2,3-dihydroxy-isovalerate. In the isomerase reaction, S2AL is rearranged via a Mg-dependent methyl migration to produce 3-hydroxy-3-methyl-2-ketobutyrate (HMKB). In the reductase reaction, this 2-ketoacid undergoes a metal-dependent reduction by NADPH to yield (R)-2,3-dihydroxy-isovalerate. The sequence is that of Ketol-acid reductoisomerase (NADP(+)) from Mycobacterium leprae (strain TN).